Reading from the N-terminus, the 131-residue chain is MAGVKALVALSFSGAIGLTFLMLGCALEDYGVYWPLFVLVFHALSPIPHFIAKRATYDSDATSSACRELAYFFTTGIVVSAFGFPVILARVAVIKWGACGLVLAGNAVIFLTIQGFFLVFGRGDDFSWEQW.

Helical transmembrane passes span 7–27, 32–52, 69–89, and 100–120; these read LVAL…GCAL, VYWP…HFIA, LAYF…VILA, and GLVL…FLVF.

The protein belongs to the OB-RGRP/VPS55 family. Interacts with LEPR. Interacts with RAB13.

The protein resides in the golgi apparatus membrane. The protein localises to the endosome membrane. Negatively regulates leptin receptor (LEPR) cell surface expression, and thus decreases response to leptin/LEP. Negatively regulates growth hormone (GH) receptor cell surface expression in liver. May play a role in liver resistance to GH during periods of reduced nutrient availability. This Sus scrofa (Pig) protein is Leptin receptor gene-related protein (LEPROT).